A 360-amino-acid chain; its full sequence is MSDLASLETSILDQIAAAGDEAALEAVRVAALGKKGSISALLATLGKMSPDERKTQGAAINLAKDKVTQALSARRDVLKAAALDARLAAETIDVTLPLQDTPADTGRIHPLSQVMDELTTIFADMGFSIAEGPDVETDDYNFTKLNFPEGHPAREMHDTFFFNPKEDGSRMLLRTHTSPVQVRTMLSQKPPIRVICPGRTYRIDSDATHTPQFHQVEGLVIDKGSHLGHLKWILHEFCKAFFEVDHINMKFRPSFFPFTEPSLEVDIQCRRDKGEIRFGEGEDWLEILGCGMVHPNVLRACGIDPDEYQGFAWGMGIDRIAMLKYGMSDLRQLFEGDVRWLSHYGFKPLEVPTLAGGLST.

Glu-260 serves as a coordination point for Mg(2+).

It belongs to the class-II aminoacyl-tRNA synthetase family. Phe-tRNA synthetase alpha subunit type 1 subfamily. As to quaternary structure, tetramer of two alpha and two beta subunits. The cofactor is Mg(2+).

It localises to the cytoplasm. The catalysed reaction is tRNA(Phe) + L-phenylalanine + ATP = L-phenylalanyl-tRNA(Phe) + AMP + diphosphate + H(+). This is Phenylalanine--tRNA ligase alpha subunit from Bradyrhizobium sp. (strain ORS 278).